The sequence spans 400 residues: Acetate kinase (400 aa).

Residue Asn-7 coordinates Mg(2+). Lys-14 serves as a coordination point for ATP. Arg-91 contacts substrate. Catalysis depends on Asp-148, which acts as the Proton donor/acceptor. ATP is bound by residues 208 to 212 (HLGNG), 284 to 286 (DMR), and 332 to 336 (GVGEN). Glu-384 is a binding site for Mg(2+).

This sequence belongs to the acetokinase family. Homodimer. The cofactor is Mg(2+). It depends on Mn(2+) as a cofactor.

The protein localises to the cytoplasm. The catalysed reaction is acetate + ATP = acetyl phosphate + ADP. The protein operates within metabolic intermediate biosynthesis; acetyl-CoA biosynthesis; acetyl-CoA from acetate: step 1/2. Its function is as follows. Catalyzes the formation of acetyl phosphate from acetate and ATP. Can also catalyze the reverse reaction. In Coprothermobacter proteolyticus (strain ATCC 35245 / DSM 5265 / OCM 4 / BT), this protein is Acetate kinase.